A 1378-amino-acid chain; its full sequence is MIPNDAEGAMDSLLKEIDHEMEVTIGTIDAQEDHSKQKEETEATNQQTWKLPLQDIGDETMDMLVKHNTKNNVINPNFNKKDVDTNESPKNNNDKNVVFNDNVQLLELSANMDESVLMSTPTKSDIDISPNKVLINLGDDIANESNEDNKLPLDNKTESEDSDLVSTMLLSKIPITHTENINDFYEKKSTDIRASTSRISSVSSDIEGTPLPTTVQTDQFELLKQAMKQTFEEDNNSNIDISPLKESLLSSELKTKQNLSIEQNEETSVDSIDNSVIHNSEYEVHARSNEREEENENDFENSIEDLEISTHVIEKSPSIEAISTLDPNTDNNKEHFIINNITKDSTFIEVTSDSKIQIDLKDSPENTLHTNEDQKEANTENVASETNIKETDQVIHIPTLTEEEISTITNITNDTETTEEGSKAEEDAKNSDVSNSQNSESINTTITNSLIGIDQNLTNKSSDITNDYEEPPKENELKSSPDVIEKGHSSIEHFDDEKITNSSALGTSNYISIPLDTLQEATPVTDSGKTFELQNQDSDNINSERIQNLNGSTPVEEKFNADDELLKTNQSHITQNKDKSNINEIDNSGTTSIVSDHVVAPILPPLPKIDKIFIDDPFGEEYDISNDSIDLTKSTRPGDYLSIWHIQEEELKQVSPASTTNSQFSNRILSNASSNASAESRISSTAFKFKPRIVSRSRYINPESRVNSFNISEEMILPQLYGALDPMRRSSRMSRTIQNSIKANRQKSEQYAGTRKYSIEIQPNQESRISSRIISNKLEEVSSENDKVETMNNSITMDGSFQLLPSFLDNSFGEQLDLTFSKFAKDVLSLRSSSLAQSEIHDNSINIWGEDNFIGNTSKNNDHNAMLDSKNKLLEVTDDEKSISESINKDIFADGILKSSIFNDITVSRGLNINGLDVDLSDSESVRVSLLTAETDASESGTPIKNTVKDSHVSSPFKVVNISKWKNQDGPESDHEVEEIAEIQIEAEKSSESIADISPIKMKPFVDTVVIEEPSQTALVDAGSLYLKLKGCLNIKLTGIKHHDARYCFEFDNGRNSIQTAWAVIPSDGDIRVNHDFESTVFEVGSKLYVTLKCKYTPPKTEIVEVVEKVLIPKKKLFGKAEYKYEKRFVQRDSKKDEWNNLFARDGSFGRAEVLLDHTFLNSVKYNKRNCTFDMMNEWTRLNDKENIENVFNIPRKPKYKVADLKMEVCYLDRVSNKEVFPVSFDKCEMIIKKYKEQLLISKEGYLMQEGGDVCNNLVRRFFKLQGTDLIGYHEVSNLPVVTINMLKVIDVVSSDDLKEEEGKQRSGNSKRNFTDHVLFGGCIQLVFTDEEVINLYADTSAQEKIEWYSKLKKTVDLNICHQPWVTKLAEAQKLEEC.

Disordered regions lie at residues 71-95, 361-441, and 458-480; these read NNVI…NNDK, KDSP…NSES, and TNKS…LKSS. Residues 361 to 378 are compositionally biased toward basic and acidic residues; the sequence is KDSPENTLHTNEDQKEAN. The segment covering 406–415 has biased composition (low complexity); sequence STITNITNDT. Over residues 420 to 430 the composition is skewed to basic and acidic residues; the sequence is EGSKAEEDAKN. A compositionally biased stretch (polar residues) spans 431–441; the sequence is SDVSNSQNSES. Positions 470–480 are enriched in basic and acidic residues; that stretch reads EPPKENELKSS. Residues 1240–1357 form the PH domain; the sequence is LISKEGYLMQ…WYSKLKKTVD (118 aa).

This sequence belongs to the BUD4 family.

The protein localises to the bud neck. Functionally, required for selection of future bud sites. Cooperates with other bud site selection proteins to recognize a spatial landmark during mitosis and they subsequently become a landmark for downstream polarity establishment factors that coordinate budding and cytokinesis. Involved in the septin organization at the bud neck. This chain is Bud site selection protein 4 (BUD4), found in Vanderwaltozyma polyspora (strain ATCC 22028 / DSM 70294 / BCRC 21397 / CBS 2163 / NBRC 10782 / NRRL Y-8283 / UCD 57-17) (Kluyveromyces polysporus).